Reading from the N-terminus, the 164-residue chain is UPF0304 protein ESA_00925 (164 aa).

It belongs to the UPF0304 family.

This is UPF0304 protein ESA_00925 from Cronobacter sakazakii (strain ATCC BAA-894) (Enterobacter sakazakii).